A 35-amino-acid polypeptide reads, in one-letter code: Photosystem II reaction center protein T (35 aa).

A helical membrane pass occupies residues 3–23 (ALVYTFLLVSTLGILFFAIFF).

Belongs to the PsbT family. PSII is composed of 1 copy each of membrane proteins PsbA, PsbB, PsbC, PsbD, PsbE, PsbF, PsbH, PsbI, PsbJ, PsbK, PsbL, PsbM, PsbT, PsbY, PsbZ, Psb30/Ycf12, at least 3 peripheral proteins of the oxygen-evolving complex and a large number of cofactors. It forms dimeric complexes.

It localises to the plastid. Its subcellular location is the chloroplast thylakoid membrane. Functionally, found at the monomer-monomer interface of the photosystem II (PS II) dimer, plays a role in assembly and dimerization of PSII. PSII is a light-driven water plastoquinone oxidoreductase, using light energy to abstract electrons from H(2)O, generating a proton gradient subsequently used for ATP formation. The sequence is that of Photosystem II reaction center protein T from Gnetum gnemon (Spanish joint-fir).